Here is a 329-residue protein sequence, read N- to C-terminus: Tetraacyldisaccharide 4'-kinase (329 aa).

57 to 64 (TAGGSGKT) is a binding site for ATP.

This sequence belongs to the LpxK family.

The enzyme catalyses a lipid A disaccharide + ATP = a lipid IVA + ADP + H(+). It functions in the pathway glycolipid biosynthesis; lipid IV(A) biosynthesis; lipid IV(A) from (3R)-3-hydroxytetradecanoyl-[acyl-carrier-protein] and UDP-N-acetyl-alpha-D-glucosamine: step 6/6. Its function is as follows. Transfers the gamma-phosphate of ATP to the 4'-position of a tetraacyldisaccharide 1-phosphate intermediate (termed DS-1-P) to form tetraacyldisaccharide 1,4'-bis-phosphate (lipid IVA). This chain is Tetraacyldisaccharide 4'-kinase, found in Thiobacillus denitrificans (strain ATCC 25259 / T1).